Consider the following 488-residue polypeptide: 3-octaprenyl-4-hydroxybenzoate carboxy-lyase (488 aa).

Asparagine 172 is a binding site for Mn(2+). Prenylated FMN-binding positions include 175 to 177 (IYR), 189 to 191 (RWL), and 194 to 195 (RG). Residue glutamate 238 coordinates Mn(2+). Catalysis depends on aspartate 287, which acts as the Proton donor.

The protein belongs to the UbiD family. As to quaternary structure, homohexamer. Prenylated FMN serves as cofactor. The cofactor is Mn(2+).

It is found in the cell membrane. The enzyme catalyses a 4-hydroxy-3-(all-trans-polyprenyl)benzoate + H(+) = a 2-(all-trans-polyprenyl)phenol + CO2. It participates in cofactor biosynthesis; ubiquinone biosynthesis. Functionally, catalyzes the decarboxylation of 3-octaprenyl-4-hydroxy benzoate to 2-octaprenylphenol, an intermediate step in ubiquinone biosynthesis. This chain is 3-octaprenyl-4-hydroxybenzoate carboxy-lyase, found in Pseudomonas savastanoi pv. phaseolicola (strain 1448A / Race 6) (Pseudomonas syringae pv. phaseolicola (strain 1448A / Race 6)).